The primary structure comprises 940 residues: Isoleucine--tRNA ligase (940 aa).

Positions 58-68 (PYANGSIHIGH) match the 'HIGH' region motif. Residue glutamate 564 participates in L-isoleucyl-5'-AMP binding. Residues 605–609 (KMSKS) carry the 'KMSKS' region motif. Lysine 608 provides a ligand contact to ATP. Cysteine 903, cysteine 906, cysteine 923, and cysteine 926 together coordinate Zn(2+).

This sequence belongs to the class-I aminoacyl-tRNA synthetase family. IleS type 1 subfamily. As to quaternary structure, monomer. Zn(2+) is required as a cofactor.

Its subcellular location is the cytoplasm. It carries out the reaction tRNA(Ile) + L-isoleucine + ATP = L-isoleucyl-tRNA(Ile) + AMP + diphosphate. Catalyzes the attachment of isoleucine to tRNA(Ile). As IleRS can inadvertently accommodate and process structurally similar amino acids such as valine, to avoid such errors it has two additional distinct tRNA(Ile)-dependent editing activities. One activity is designated as 'pretransfer' editing and involves the hydrolysis of activated Val-AMP. The other activity is designated 'posttransfer' editing and involves deacylation of mischarged Val-tRNA(Ile). The chain is Isoleucine--tRNA ligase from Shewanella sp. (strain MR-7).